The sequence spans 334 residues: 3-keto-steroid reductase/17-beta-hydroxysteroid dehydrogenase 7 (334 aa).

Residues 1–229 (MRKVVLITGA…VTCPGVVMTN (229 aa)) lie on the Extracellular side of the membrane. 8-15 (TGASSGIG) provides a ligand contact to NAD(+). The N-linked (GlcNAc...) asparagine glycan is linked to Asn37. Ser171 provides a ligand contact to substrate. A glycan (N-linked (GlcNAc...) asparagine) is linked at Asn178. Catalysis depends on Tyr193, which acts as the Proton acceptor. Asn229 is a glycosylation site (N-linked (GlcNAc...) asparagine). Residues 230 to 250 (LTYGILPPFVWTLLLPVIWLL) traverse the membrane as a helical segment. At 251–334 (RFFAHAFTVT…ITIQKSDHHS (84 aa)) the chain is on the cytoplasmic side.

It belongs to the short-chain dehydrogenases/reductases (SDR) family. ERG27 subfamily. Binds to the short form of prolactin receptor. Phosphorylated. Most abundant in ovaries of pregnant animals.

It localises to the endoplasmic reticulum membrane. It carries out the reaction 17beta-estradiol + NADP(+) = estrone + NADPH + H(+). The enzyme catalyses a 3beta-hydroxysteroid + NADP(+) = a 3-oxosteroid + NADPH + H(+). It catalyses the reaction 4alpha-methyl-5alpha-cholest-7-en-3beta-ol + NADP(+) = 4alpha-methyl-5alpha-cholest-7-en-3-one + NADPH + H(+). The catalysed reaction is 4alpha-methyl-5alpha-cholest-8-en-3-one + NADPH + H(+) = 4alpha-methyl-5alpha-cholest-8-en-3beta-ol + NADP(+). It carries out the reaction 3-dehydro-4alpha-methylzymosterol + NADPH + H(+) = 4alpha-methylzymosterol + NADP(+). The enzyme catalyses zymosterone + NADPH + H(+) = zymosterol + NADP(+). It catalyses the reaction 5alpha-cholest-8-en-3-one + NADPH + H(+) = 5alpha-cholest-8-en-3beta-ol + NADP(+). The catalysed reaction is 5alpha-androstane-3beta,17beta-diol + NADP(+) = 17beta-hydroxy-5alpha-androstan-3-one + NADPH + H(+). It carries out the reaction 5alpha-androstane-3alpha,17beta-diol + NADP(+) = 17beta-hydroxy-5alpha-androstan-3-one + NADPH + H(+). It functions in the pathway steroid biosynthesis; estrogen biosynthesis. Its pathway is steroid biosynthesis; zymosterol biosynthesis; zymosterol from lanosterol: step 5/6. Bifunctional enzyme involved in steroid-hormone metabolism and cholesterol biosynthesis. Catalyzes the NADP(H)-dependent reduction of estrogens and androgens and regulates the biological potency of these steroids. Converts estrone (E1) to a more potent estrogen, 17beta-estradiol (E2). Converts dihydrotestosterone (DHT) to an inactive form. Also participates in the post-squalene cholesterol biosynthesis, as a 3-ketosteroid reductase. This chain is 3-keto-steroid reductase/17-beta-hydroxysteroid dehydrogenase 7 (Hsd17b7), found in Rattus norvegicus (Rat).